Reading from the N-terminus, the 371-residue chain is Glycosyltransferase 8 domain-containing protein 1 (371 aa).

Topologically, residues 1–7 are cytoplasmic; sequence MSFRKVN. A helical; Signal-anchor for type II membrane protein transmembrane segment spans residues 8–28; sequence IIILVLAVALFLLVLHHNFLS. The Lumenal portion of the chain corresponds to 29-371; the sequence is LSSLLRNEVT…RRYTEISNIK (343 aa). N-linked (GlcNAc...) asparagine glycosylation is found at Asn-249 and Asn-257.

It belongs to the glycosyltransferase 8 family.

Its subcellular location is the membrane. This chain is Glycosyltransferase 8 domain-containing protein 1 (GLT8D1), found in Homo sapiens (Human).